Here is a 160-residue protein sequence, read N- to C-terminus: uncharacterized protein (160 aa).

An N-terminal signal peptide occupies residues 1–25 (MKVTLLLLLIAVLLLLLIFMKVCKQ).

This is an uncharacterized protein from Invertebrate iridescent virus 6 (IIV-6).